The following is a 1705-amino-acid chain: Alpha-protein kinase 3 (1705 aa).

Residues 1–10 show a composition bias toward low complexity; sequence MGSRRAPSRG. The segment at 1-33 is disordered; it reads MGSRRAPSRGWGAGGRSGAGGDGEDDGPVWIPS. Positions 11-21 are enriched in gly residues; that stretch reads WGAGGRSGAGG. One can recognise an Ig-like 1 domain in the interval 77–168; the sequence is PLFETTLKSR…GIVSCSGVLE (92 aa). Residues 211-221 show a composition bias toward basic and acidic residues; sequence DTLRKLSPDRF. 5 disordered regions span residues 211–244, 308–749, 792–845, 1082–1145, and 1173–1226; these read DTLRKLSPDRFQRKRRLSGAQAPGPSVPTREPEG, LKEE…GPRA, GPLS…ERPG, GLAS…KFPG, and RAAG…MLEV. Serine 228 is subject to Phosphoserine. A compositionally biased stretch (basic and acidic residues) spans 308–342; the sequence is LKEESGAKKKKKDEESKQGLRKPELEKAAQSRRSS. Residues 370-382 are compositionally biased toward low complexity; the sequence is PRGRAARGPGSSG. Over residues 495–504 the composition is skewed to polar residues; sequence DSKPISSLSQ. Residues 557-579 are compositionally biased toward low complexity; sequence TTTAPTMSASSSSDVASIGVSTS. Over residues 598–609 the composition is skewed to polar residues; it reads TSANQRTGSKKN. Basic and acidic residues predominate over residues 647 to 657; that stretch reads ESKRPQSDRSA. Residues 666–676 show a composition bias toward polar residues; that stretch reads RAETQLETTQA. Residues 679–700 are compositionally biased toward basic and acidic residues; it reads KIQEDRKAQADKGTQEDRRMQG. Polar residues predominate over residues 708–729; sequence KGTQSEGSAPTAMEGQSEQEVA. Positions 736-745 are enriched in pro residues; sequence SRTPKLPPTA. Positions 829–844 are enriched in basic and acidic residues; the sequence is AKQEDSPFQCPKEERP. A compositionally biased stretch (low complexity) spans 1120 to 1131; the sequence is GQAAPGQGPSAE. At serine 1222 the chain carries Phosphoserine. An Ig-like 2 domain is found at 1274–1362; the sequence is PQVIRKIRVE…GSASTDFCLS (89 aa). A disulfide bridge connects residues cysteine 1296 and cysteine 1346. The 236-residue stretch at 1390 to 1625 folds into the Alpha-type protein kinase domain; the sequence is KGLADSGCWG…YCELLGLTPL (236 aa). A disordered region spans residues 1628–1705; that stretch reads PEAAHPQAKA…EEGSKAQGMR (78 aa). Residues 1664–1696 are compositionally biased toward polar residues; sequence PQGTRKSAPSSKATPQASEPVTTQLLGQPPTQE.

This sequence belongs to the protein kinase superfamily. Alpha-type protein kinase family. ALPK subfamily.

It localises to the nucleus. The catalysed reaction is L-seryl-[protein] + ATP = O-phospho-L-seryl-[protein] + ADP + H(+). It carries out the reaction L-threonyl-[protein] + ATP = O-phospho-L-threonyl-[protein] + ADP + H(+). Involved in cardiomyocyte differentiation. The polypeptide is Alpha-protein kinase 3 (Homo sapiens (Human)).